Reading from the N-terminus, the 124-residue chain is Large ribosomal subunit protein uL18 (124 aa).

The protein belongs to the universal ribosomal protein uL18 family. Part of the 50S ribosomal subunit; part of the 5S rRNA/L5/L18/L25 subcomplex. Contacts the 5S and 23S rRNAs.

Functionally, this is one of the proteins that bind and probably mediate the attachment of the 5S RNA into the large ribosomal subunit, where it forms part of the central protuberance. The chain is Large ribosomal subunit protein uL18 from Koribacter versatilis (strain Ellin345).